A 1228-amino-acid polypeptide reads, in one-letter code: DNA-directed RNA polymerase subunit beta (1228 aa).

This sequence belongs to the RNA polymerase beta chain family. In terms of assembly, the RNAP catalytic core consists of 2 alpha, 1 beta, 1 beta' and 1 omega subunit. When a sigma factor is associated with the core the holoenzyme is formed, which can initiate transcription.

The enzyme catalyses RNA(n) + a ribonucleoside 5'-triphosphate = RNA(n+1) + diphosphate. Its function is as follows. DNA-dependent RNA polymerase catalyzes the transcription of DNA into RNA using the four ribonucleoside triphosphates as substrates. The polypeptide is DNA-directed RNA polymerase subunit beta (Leptospira biflexa serovar Patoc (strain Patoc 1 / Ames)).